The following is a 2185-amino-acid chain: DNA polymerase epsilon catalytic subunit A (2185 aa).

The Zn(2+) site is built by Cys-2072, Cys-2075, Cys-2094, and Cys-2097. A CysA-type zinc finger spans residues 2072 to 2097 (CEHCSYISDIDICRESMERVFICQSC). [4Fe-4S] cluster contacts are provided by Cys-2128, Cys-2131, Cys-2143, and Cys-2145. The short motif at 2128-2145 (CNKCHKIKEDAMSPYCPC) is the CysB motif element.

The protein belongs to the DNA polymerase type-B family. Heterotetramer. Consists of 4 subunits: POL2, DPB2, DPB3 and DPB4. Requires [4Fe-4S] cluster as cofactor.

It is found in the nucleus. The enzyme catalyses DNA(n) + a 2'-deoxyribonucleoside 5'-triphosphate = DNA(n+1) + diphosphate. Its function is as follows. DNA polymerase II participates in chromosomal DNA replication. This Kluyveromyces lactis (strain ATCC 8585 / CBS 2359 / DSM 70799 / NBRC 1267 / NRRL Y-1140 / WM37) (Yeast) protein is DNA polymerase epsilon catalytic subunit A (POL2).